We begin with the raw amino-acid sequence, 362 residues long: S-adenosylmethionine decarboxylase proenzyme (362 aa).

Catalysis depends on residues Glu11 and Glu14. The active-site Schiff-base intermediate with substrate; via pyruvic acid is the Ser71. The residue at position 71 (Ser71) is a Pyruvic acid (Ser); by autocatalysis. Cys85 acts as the Proton donor; for catalytic activity in catalysis. Catalysis depends on proton acceptor; for processing activity residues Ser234 and His247.

The protein belongs to the eukaryotic AdoMetDC family. It depends on pyruvate as a cofactor. In terms of processing, is synthesized initially as an inactive proenzyme. Formation of the active enzyme involves a self-maturation process in which the active site pyruvoyl group is generated from an internal serine residue via an autocatalytic post-translational modification. Two non-identical subunits are generated from the proenzyme in this reaction, and the pyruvate is formed at the N-terminus of the alpha chain, which is derived from the carboxyl end of the proenzyme. The post-translation cleavage follows an unusual pathway, termed non-hydrolytic serinolysis, in which the side chain hydroxyl group of the serine supplies its oxygen atom to form the C-terminus of the beta chain, while the remainder of the serine residue undergoes an oxidative deamination to produce ammonia and the pyruvoyl group blocking the N-terminus of the alpha chain.

The catalysed reaction is S-adenosyl-L-methionine + H(+) = S-adenosyl 3-(methylsulfanyl)propylamine + CO2. It participates in amine and polyamine biosynthesis; S-adenosylmethioninamine biosynthesis; S-adenosylmethioninamine from S-adenosyl-L-methionine: step 1/1. This is S-adenosylmethionine decarboxylase proenzyme (SAMDC) from Ipomoea batatas (Sweet potato).